The sequence spans 215 residues: Chitooligosaccharide deacetylase (215 aa).

Residues 18–209 (PSVYLTFDDG…ALHDRGFIIR (192 aa)) enclose the NodB homology domain. D25 serves as the catalytic Proton acceptor. Residues H76 and H80 each coordinate a divalent metal cation. Catalysis depends on H171, which acts as the Proton donor.

It belongs to the polysaccharide deacetylase family.

It is found in the cytoplasm. In terms of biological role, is involved in generating a small heat-stable compound (Nod), an acylated oligomer of N-acetylglucosamine, that stimulates mitosis in various plant protoplasts. The chain is Chitooligosaccharide deacetylase (nodB) from Sinorhizobium fredii (strain NBRC 101917 / NGR234).